The following is a 494-amino-acid chain: NADH-ubiquinone oxidoreductase chain 4 (494 aa).

Transmembrane regions (helical) follow at residues 6–26, 41–61, 87–107, 118–138, 141–161, 172–192, 207–227, 246–266, 280–300, 302–322, 336–356, 375–395, 415–435, and 460–480; these read IMIYLFSLLLIPLIVYFLLIY, TIGLTTLIINLILSMIIFILF, IDGISIYFLLLTTMIMPISLV, VLSFVIIILLLETLLLAVFLV, ILLFYIFFESILPPLFLLIGL, FYLFLYTLLGSLFMLLSIITM, ANFSYITQLFLFYGIFISFAV, PLAGSVILAGIVWKLRWYGIF, YTYIVYVIGVITIFYTSFSTL, TIAIKELIAYSSVSHAAVYLL, IALGLAHGFVSSGLFICVGGI, LMPIFCILFLYITLGNCGSPL, VLGVLASTSIVFSAAYTIFMF, and FILLISLVVPAVFFGIYPAVI.

Belongs to the complex I subunit 4 family.

The protein resides in the mitochondrion membrane. It carries out the reaction a ubiquinone + NADH + 5 H(+)(in) = a ubiquinol + NAD(+) + 4 H(+)(out). In terms of biological role, core subunit of the mitochondrial membrane respiratory chain NADH dehydrogenase (Complex I) that is believed to belong to the minimal assembly required for catalysis. Complex I functions in the transfer of electrons from NADH to the respiratory chain. The immediate electron acceptor for the enzyme is believed to be ubiquinone. The protein is NADH-ubiquinone oxidoreductase chain 4 (ND4) of Trichophyton rubrum (Athlete's foot fungus).